The chain runs to 441 residues: NADH-quinone oxidoreductase subunit D (441 aa).

The protein belongs to the complex I 49 kDa subunit family. NDH-1 is composed of 14 different subunits. Subunits NuoB, C, D, E, F, and G constitute the peripheral sector of the complex.

Its subcellular location is the cell membrane. It carries out the reaction a quinone + NADH + 5 H(+)(in) = a quinol + NAD(+) + 4 H(+)(out). Its function is as follows. NDH-1 shuttles electrons from NADH, via FMN and iron-sulfur (Fe-S) centers, to quinones in the respiratory chain. The immediate electron acceptor for the enzyme in this species is believed to be a menaquinone. Couples the redox reaction to proton translocation (for every two electrons transferred, four hydrogen ions are translocated across the cytoplasmic membrane), and thus conserves the redox energy in a proton gradient. This chain is NADH-quinone oxidoreductase subunit D, found in Mycobacterium avium (strain 104).